The following is a 167-amino-acid chain: SsrA-binding protein (167 aa).

The disordered stretch occupies residues 144-167; sequence HDKRAADKEKQSKKEVRSAMAKYQ. The span at 146-160 shows a compositional bias: basic and acidic residues; the sequence is KRAADKEKQSKKEVR.

It belongs to the SmpB family.

It is found in the cytoplasm. Functionally, required for rescue of stalled ribosomes mediated by trans-translation. Binds to transfer-messenger RNA (tmRNA), required for stable association of tmRNA with ribosomes. tmRNA and SmpB together mimic tRNA shape, replacing the anticodon stem-loop with SmpB. tmRNA is encoded by the ssrA gene; the 2 termini fold to resemble tRNA(Ala) and it encodes a 'tag peptide', a short internal open reading frame. During trans-translation Ala-aminoacylated tmRNA acts like a tRNA, entering the A-site of stalled ribosomes, displacing the stalled mRNA. The ribosome then switches to translate the ORF on the tmRNA; the nascent peptide is terminated with the 'tag peptide' encoded by the tmRNA and targeted for degradation. The ribosome is freed to recommence translation, which seems to be the essential function of trans-translation. The sequence is that of SsrA-binding protein from Synechococcus sp. (strain CC9902).